Reading from the N-terminus, the 372-residue chain is 3,5-dihydroxyphenylacetyl-CoA synthase (372 aa).

C160 is a catalytic residue.

Belongs to the thiolase-like superfamily. Chalcone/stilbene synthases family.

The enzyme catalyses 4 malonyl-CoA + 4 H(+) = (3,5-dihydroxyphenyl)acetyl-CoA + 4 CO2 + 3 CoA + H2O. It participates in antibiotic biosynthesis. Its function is as follows. Involved in the biosynthesis of the nonproteinogenic amino acid monomer (S)-3,5-dihydroxyphenylglycine (Dpg) responsible of the production of balhimycin antibiotic. Catalyzes the Claisen condensation of four molecules of malonyl-CoA to yield 3,5-dihydroxyphenylacetyl-CoA (DPA-CoA) and three free coenzyme A (CoA). DpgA requires the presence of the dehydratases DpgB and DpgD to facilitate the aromatization of the DPA-S-DgpA or DPA-S-CoA intermediate. In Amycolatopsis balhimycina, this protein is 3,5-dihydroxyphenylacetyl-CoA synthase.